The sequence spans 558 residues: Formate--tetrahydrofolate ligase (558 aa).

67 to 74 (TPAGEGKT) contributes to the ATP binding site.

Belongs to the formate--tetrahydrofolate ligase family.

It catalyses the reaction (6S)-5,6,7,8-tetrahydrofolate + formate + ATP = (6R)-10-formyltetrahydrofolate + ADP + phosphate. Its pathway is one-carbon metabolism; tetrahydrofolate interconversion. In Sphingobium sp. (strain NBRC 103272 / SYK-6), this protein is Formate--tetrahydrofolate ligase.